The sequence spans 363 residues: 3-isopropylmalate dehydrogenase (363 aa).

Residue 78 to 91 (GPKWEHLPPDQQPE) coordinates NAD(+). Arg99, Arg109, Arg138, and Asp227 together coordinate substrate. The Mg(2+) site is built by Asp227, Asp251, and Asp255. NAD(+) is bound at residue 285–297 (GSAPDIAGKNIAN).

It belongs to the isocitrate and isopropylmalate dehydrogenases family. LeuB type 1 subfamily. Homodimer. The cofactor is Mg(2+). It depends on Mn(2+) as a cofactor.

The protein resides in the cytoplasm. The enzyme catalyses (2R,3S)-3-isopropylmalate + NAD(+) = 4-methyl-2-oxopentanoate + CO2 + NADH. Its pathway is amino-acid biosynthesis; L-leucine biosynthesis; L-leucine from 3-methyl-2-oxobutanoate: step 3/4. With respect to regulation, requires K(+) ions for optimum activity. In terms of biological role, catalyzes the oxidation of 3-carboxy-2-hydroxy-4-methylpentanoate (3-isopropylmalate) to 3-carboxy-4-methyl-2-oxopentanoate. The product decarboxylates to 4-methyl-2 oxopentanoate. The sequence is that of 3-isopropylmalate dehydrogenase from Escherichia coli (strain K12).